The sequence spans 196 residues: Large ribosomal subunit protein uL18 (196 aa).

It belongs to the universal ribosomal protein uL18 family. In terms of assembly, part of the 50S ribosomal subunit. Contacts the 5S and 23S rRNAs.

In terms of biological role, this is one of the proteins that bind and probably mediate the attachment of the 5S RNA into the large ribosomal subunit, where it forms part of the central protuberance. This is Large ribosomal subunit protein uL18 from Saccharolobus islandicus (strain L.S.2.15 / Lassen #1) (Sulfolobus islandicus).